The following is a 1464-amino-acid chain: Gag-Pol polyprotein (1464 aa).

G2 is lipidated: N-myristoyl glycine; by host. Residues 7-31 form an interaction with Gp41 region; it reads VLSGKKTDELEKVRLRPGGKKRYML. Positions 16-22 match the Nuclear export signal motif; the sequence is LEKVRLR. The short motif at 26 to 32 is the Nuclear localization signal element; that stretch reads KKRYMLK. Y130 is modified (phosphotyrosine; by host). The tract at residues 186-223 is interaction with human PPIA/CYPA and NUP153; the sequence is NCVGEHQAAMQIIREIINEEAADWDQQHPSPGPMPAGQ. The tract at residues 274-360 is dimerization/Multimerization of capsid protein p24; sequence YNPTNILDIK…GGPGQKARLM (87 aa). CCHC-type zinc fingers lie at residues 387 to 404 and 408 to 425; these read VTCW…QCKA and QGCW…KCPE. Over residues 483 to 499 the composition is skewed to basic and acidic residues; sequence AKELHATREEAEGEQRE. The interval 483–504 is disordered; the sequence is AKELHATREEAEGEQRETLQGG. Residues 511–515 form a dimerization of protease region; the sequence is PQFSL. One can recognise a Peptidase A2 domain in the interval 531-600; sequence EVLLDTGADD…PINIFGRNIL (70 aa). D535 (for protease activity; shared with dimeric partner) is an active-site residue. Dimerization of protease stretches follow at residues 559–565 and 598–610; these read GIGGFIN and NILN…LNFP. The 191-residue stretch at 654–844 folds into the Reverse transcriptase domain; sequence GQLEEAPPTN…PFKWMGYELW (191 aa). Positions 719, 794, and 795 each coordinate Mg(2+). The segment at 836–844 is RT 'primer grip'; sequence FKWMGYELW. Residues 1006–1022 carry the Tryptophan repeat motif motif; it reads WDQWWTDYWQVTWIPEW. Positions 1042-1165 constitute an RNase H type-1 domain; the sequence is LEGVETYYTD…VDHLVSQGIR (124 aa). Mg(2+) is bound by residues D1051, E1086, D1106, and D1157. The Integrase-type zinc finger occupies 1171–1212; it reads EKIEPAQEEHEKYHNNVKELVHKFGIPQLVARQIVNSCDKCQ. Zn(2+)-binding residues include H1180, H1184, C1208, and C1211. The Integrase catalytic domain maps to 1222 to 1373; that stretch reads VNSELGTWQM…PAERIVNMIT (152 aa). Residues D1232, D1284, and E1320 each contribute to the Mg(2+) site. Residues 1391 to 1438 constitute a DNA-binding region (integrase-type); sequence FRVYYREGRDQLWKGPGDLLWKGEGAVIIKVGTEIKVIPRRKAKIIRN.

In terms of assembly, homotrimer; further assembles as hexamers of trimers. Interacts with gp41 (via C-terminus). Interacts with host CALM1; this interaction induces a conformational change in the Matrix protein, triggering exposure of the myristate group. Interacts with host AP3D1; this interaction allows the polyprotein trafficking to multivesicular bodies during virus assembly. Part of the pre-integration complex (PIC) which is composed of viral genome, matrix protein, Vpr and integrase. As to quaternary structure, homodimer; the homodimer further multimerizes as homohexamers or homopentamers. Interacts with human PPIA/CYPA. Interacts with human NUP153. Interacts with host PDZD8; this interaction stabilizes the capsid. Interacts with monkey TRIM5; this interaction destabilizes the capsid. Homodimer, whose active site consists of two apposed aspartic acid residues. In terms of assembly, heterodimer of p66 RT and p51 RT (RT p66/p51). Heterodimerization of RT is essential for DNA polymerase activity. The overall folding of the subdomains is similar in p66 RT and p51 RT but the spatial arrangements of the subdomains are dramatically different. As to quaternary structure, homotetramer; may further associate as a homohexadecamer. Part of the pre-integration complex (PIC) which is composed of viral genome, matrix protein, Vpr and integrase. Interacts with human SMARCB1/INI1 and human PSIP1/LEDGF isoform 1. Interacts with human KPNA3; this interaction might play a role in nuclear import of the pre-integration complex. Interacts with human NUP153; this interaction might play a role in nuclear import of the pre-integration complex. It depends on Mg(2+) as a cofactor. Post-translationally, specific enzymatic cleavages by the viral protease yield mature proteins. The protease is released by autocatalytic cleavage. The polyprotein is cleaved during and after budding, this process is termed maturation. Proteolytic cleavage of p66 RT removes the RNase H domain to yield the p51 RT subunit. Nucleocapsid protein p7 might be further cleaved after virus entry.

The protein resides in the host cell membrane. The protein localises to the host endosome. It is found in the host multivesicular body. Its subcellular location is the virion membrane. It localises to the host nucleus. The protein resides in the host cytoplasm. The protein localises to the virion. It carries out the reaction Endopeptidase for which the P1 residue is preferably hydrophobic.. The catalysed reaction is Endohydrolysis of RNA in RNA/DNA hybrids. Three different cleavage modes: 1. sequence-specific internal cleavage of RNA. Human immunodeficiency virus type 1 and Moloney murine leukemia virus enzymes prefer to cleave the RNA strand one nucleotide away from the RNA-DNA junction. 2. RNA 5'-end directed cleavage 13-19 nucleotides from the RNA end. 3. DNA 3'-end directed cleavage 15-20 nucleotides away from the primer terminus.. It catalyses the reaction 3'-end directed exonucleolytic cleavage of viral RNA-DNA hybrid.. The enzyme catalyses DNA(n) + a 2'-deoxyribonucleoside 5'-triphosphate = DNA(n+1) + diphosphate. Protease: The viral protease is inhibited by many synthetic protease inhibitors (PIs), such as amprenavir, atazanavir, indinavir, loprinavir, nelfinavir, ritonavir and saquinavir. Use of protease inhibitors in tritherapy regimens permit more ambitious therapeutic strategies. Reverse transcriptase/ribonuclease H: RT can be inhibited either by nucleoside RT inhibitors (NRTIs) or by non nucleoside RT inhibitors (NNRTIs). NRTIs act as chain terminators, whereas NNRTIs inhibit DNA polymerization by binding a small hydrophobic pocket near the RT active site and inducing an allosteric change in this region. Classical NRTIs are abacavir, adefovir (PMEA), didanosine (ddI), lamivudine (3TC), stavudine (d4T), tenofovir (PMPA), zalcitabine (ddC), and zidovudine (AZT). Classical NNRTIs are atevirdine (BHAP U-87201E), delavirdine, efavirenz (DMP-266), emivirine (I-EBU), and nevirapine (BI-RG-587). The tritherapies used as a basic effective treatment of AIDS associate two NRTIs and one NNRTI. Its function is as follows. Mediates, with Gag polyprotein, the essential events in virion assembly, including binding the plasma membrane, making the protein-protein interactions necessary to create spherical particles, recruiting the viral Env proteins, and packaging the genomic RNA via direct interactions with the RNA packaging sequence (Psi). Gag-Pol polyprotein may regulate its own translation, by the binding genomic RNA in the 5'-UTR. At low concentration, the polyprotein would promote translation, whereas at high concentration, the polyprotein would encapsidate genomic RNA and then shut off translation. Functionally, targets the polyprotein to the plasma membrane via a multipartite membrane-binding signal, that includes its myristoylated N-terminus. Matrix protein is part of the pre-integration complex. Implicated in the release from host cell mediated by Vpu. Binds to RNA. Forms the conical core that encapsulates the genomic RNA-nucleocapsid complex in the virion. Most core are conical, with only 7% tubular. The core is constituted by capsid protein hexamer subunits. The core is disassembled soon after virion entry. Host restriction factors such as TRIM5-alpha or TRIMCyp bind retroviral capsids and cause premature capsid disassembly, leading to blocks in reverse transcription. Capsid restriction by TRIM5 is one of the factors which restricts HIV-1 to the human species. Host PIN1 apparently facilitates the virion uncoating. On the other hand, interactions with PDZD8 or CYPA stabilize the capsid. In terms of biological role, encapsulates and protects viral dimeric unspliced genomic RNA (gRNA). Binds these RNAs through its zinc fingers. Acts as a nucleic acid chaperone which is involved in rearangement of nucleic acid secondary structure during gRNA retrotranscription. Also facilitates template switch leading to recombination. As part of the polyprotein, participates in gRNA dimerization, packaging, tRNA incorporation and virion assembly. Its function is as follows. Aspartyl protease that mediates proteolytic cleavages of Gag and Gag-Pol polyproteins during or shortly after the release of the virion from the plasma membrane. Cleavages take place as an ordered, step-wise cascade to yield mature proteins. This process is called maturation. Displays maximal activity during the budding process just prior to particle release from the cell. Also cleaves Nef and Vif, probably concomitantly with viral structural proteins on maturation of virus particles. Hydrolyzes host EIF4GI and PABP1 in order to shut off the capped cellular mRNA translation. The resulting inhibition of cellular protein synthesis serves to ensure maximal viral gene expression and to evade host immune response. Functionally, multifunctional enzyme that converts the viral RNA genome into dsDNA in the cytoplasm, shortly after virus entry into the cell. This enzyme displays a DNA polymerase activity that can copy either DNA or RNA templates, and a ribonuclease H (RNase H) activity that cleaves the RNA strand of RNA-DNA heteroduplexes in a partially processive 3' to 5' endonucleasic mode. Conversion of viral genomic RNA into dsDNA requires many steps. A tRNA(3)-Lys binds to the primer-binding site (PBS) situated at the 5'-end of the viral RNA. RT uses the 3' end of the tRNA primer to perform a short round of RNA-dependent minus-strand DNA synthesis. The reading proceeds through the U5 region and ends after the repeated (R) region which is present at both ends of viral RNA. The portion of the RNA-DNA heteroduplex is digested by the RNase H, resulting in a ssDNA product attached to the tRNA primer. This ssDNA/tRNA hybridizes with the identical R region situated at the 3' end of viral RNA. This template exchange, known as minus-strand DNA strong stop transfer, can be either intra- or intermolecular. RT uses the 3' end of this newly synthesized short ssDNA to perform the RNA-dependent minus-strand DNA synthesis of the whole template. RNase H digests the RNA template except for two polypurine tracts (PPTs) situated at the 5'-end and near the center of the genome. It is not clear if both polymerase and RNase H activities are simultaneous. RNase H probably can proceed both in a polymerase-dependent (RNA cut into small fragments by the same RT performing DNA synthesis) and a polymerase-independent mode (cleavage of remaining RNA fragments by free RTs). Secondly, RT performs DNA-directed plus-strand DNA synthesis using the PPTs that have not been removed by RNase H as primers. PPTs and tRNA primers are then removed by RNase H. The 3' and 5' ssDNA PBS regions hybridize to form a circular dsDNA intermediate. Strand displacement synthesis by RT to the PBS and PPT ends produces a blunt ended, linear dsDNA copy of the viral genome that includes long terminal repeats (LTRs) at both ends. Catalyzes viral DNA integration into the host chromosome, by performing a series of DNA cutting and joining reactions. This enzyme activity takes place after virion entry into a cell and reverse transcription of the RNA genome in dsDNA. The first step in the integration process is 3' processing. This step requires a complex comprising the viral genome, matrix protein, Vpr and integrase. This complex is called the pre-integration complex (PIC). The integrase protein removes 2 nucleotides from each 3' end of the viral DNA, leaving recessed CA OH's at the 3' ends. In the second step, the PIC enters cell nucleus. This process is mediated through integrase and Vpr proteins, and allows the virus to infect a non dividing cell. This ability to enter the nucleus is specific of lentiviruses, other retroviruses cannot and rely on cell division to access cell chromosomes. In the third step, termed strand transfer, the integrase protein joins the previously processed 3' ends to the 5' ends of strands of target cellular DNA at the site of integration. The 5'-ends are produced by integrase-catalyzed staggered cuts, 5 bp apart. A Y-shaped, gapped, recombination intermediate results, with the 5'-ends of the viral DNA strands and the 3' ends of target DNA strands remaining unjoined, flanking a gap of 5 bp. The last step is viral DNA integration into host chromosome. This involves host DNA repair synthesis in which the 5 bp gaps between the unjoined strands are filled in and then ligated. Since this process occurs at both cuts flanking the HIV genome, a 5 bp duplication of host DNA is produced at the ends of HIV-1 integration. Alternatively, Integrase may catalyze the excision of viral DNA just after strand transfer, this is termed disintegration. The chain is Gag-Pol polyprotein (gag-pol) from Human immunodeficiency virus type 2 subtype B (isolate EHO) (HIV-2).